The following is a 204-amino-acid chain: Leucyl/phenylalanyl-tRNA--protein transferase (204 aa).

It belongs to the L/F-transferase family.

The protein resides in the cytoplasm. It catalyses the reaction N-terminal L-lysyl-[protein] + L-leucyl-tRNA(Leu) = N-terminal L-leucyl-L-lysyl-[protein] + tRNA(Leu) + H(+). The enzyme catalyses N-terminal L-arginyl-[protein] + L-leucyl-tRNA(Leu) = N-terminal L-leucyl-L-arginyl-[protein] + tRNA(Leu) + H(+). It carries out the reaction L-phenylalanyl-tRNA(Phe) + an N-terminal L-alpha-aminoacyl-[protein] = an N-terminal L-phenylalanyl-L-alpha-aminoacyl-[protein] + tRNA(Phe). In terms of biological role, functions in the N-end rule pathway of protein degradation where it conjugates Leu, Phe and, less efficiently, Met from aminoacyl-tRNAs to the N-termini of proteins containing an N-terminal arginine or lysine. The chain is Leucyl/phenylalanyl-tRNA--protein transferase from Sinorhizobium medicae (strain WSM419) (Ensifer medicae).